A 1170-amino-acid polypeptide reads, in one-letter code: DNA-directed RNA polymerase subunit beta (1170 aa).

Belongs to the RNA polymerase beta chain family. As to quaternary structure, the RNAP catalytic core consists of 2 alpha, 1 beta, 1 beta' and 1 omega subunit. When a sigma factor is associated with the core the holoenzyme is formed, which can initiate transcription.

It catalyses the reaction RNA(n) + a ribonucleoside 5'-triphosphate = RNA(n+1) + diphosphate. Its function is as follows. DNA-dependent RNA polymerase catalyzes the transcription of DNA into RNA using the four ribonucleoside triphosphates as substrates. This chain is DNA-directed RNA polymerase subunit beta, found in Corynebacterium urealyticum (strain ATCC 43042 / DSM 7109).